A 220-amino-acid polypeptide reads, in one-letter code: Deoxyribose-phosphate aldolase (220 aa).

Catalysis depends on Asp89, which acts as the Proton donor/acceptor. Lys151 acts as the Schiff-base intermediate with acetaldehyde in catalysis. Lys180 serves as the catalytic Proton donor/acceptor.

Belongs to the DeoC/FbaB aldolase family. DeoC type 1 subfamily.

It localises to the cytoplasm. It carries out the reaction 2-deoxy-D-ribose 5-phosphate = D-glyceraldehyde 3-phosphate + acetaldehyde. The protein operates within carbohydrate degradation; 2-deoxy-D-ribose 1-phosphate degradation; D-glyceraldehyde 3-phosphate and acetaldehyde from 2-deoxy-alpha-D-ribose 1-phosphate: step 2/2. Catalyzes a reversible aldol reaction between acetaldehyde and D-glyceraldehyde 3-phosphate to generate 2-deoxy-D-ribose 5-phosphate. This Streptococcus uberis (strain ATCC BAA-854 / 0140J) protein is Deoxyribose-phosphate aldolase.